The sequence spans 564 residues: Solute carrier family 22 member 21 (564 aa).

Residues 1–20 (MLDYDEVTAFLGEWGTFQRL) lie on the Cytoplasmic side of the membrane. Residues 21–41 (IFFLLSASIIPNGFTGLSAVF) traverse the membrane as a helical segment. At 42 to 142 (LTAIPEHRCR…DLVCKDDWKA (101 aa)) the chain is on the extracellular side. N57, N64, and N91 each carry an N-linked (GlcNAc...) asparagine glycan. Residues 143-163 (PLTTSFFYVGVLLGSFISGQL) form a helical membrane-spanning segment. The Cytoplasmic segment spans residues 164-172 (SDRFGRKNI). The chain crosses the membrane as a helical span at residues 173–193 (LFLTMAMHTGFSFIQVFSVNF). Residues 194–197 (EMFT) lie on the Extracellular side of the membrane. Residues 198 to 218 (LLYTLVGMGHISNYVAAFVLG) traverse the membrane as a helical segment. 218–225 (GTEMLSKS) serves as a coordination point for ATP. Over 219–232 (TEMLSKSVRIIFAT) the chain is Cytoplasmic. The chain crosses the membrane as a helical span at residues 233-253 (LGVCIFFAFGFMVLPLFAYFI). At 254 to 257 (REWR) the chain is on the extracellular side. Residues 258 to 278 (RLLLAITLPGVLCGALWWFIP) form a helical membrane-spanning segment. The Cytoplasmic portion of the chain corresponds to 279–344 (ESPRWLISQG…YDLVRTPNIR (66 aa)). Residues 345–365 (ILTIMSIILWLTISVGYFGLS) traverse the membrane as a helical segment. At 366 to 376 (LDTPNLNGNIY) the chain is on the extracellular side. The chain crosses the membrane as a helical span at residues 377–397 (VNCFLLAAVEVPAYVLAWLLL). Residues 398-409 (QHVSRRYSMAGS) are Cytoplasmic-facing. The chain crosses the membrane as a helical span at residues 410–430 (LFLGGSVLLLVQLVPSDLHYL). Topologically, residues 431–433 (STT) are extracellular. The helical transmembrane segment at 434 to 454 (LVMVGKFGITSAYSMVYVYTA) threads the bilayer. Residues 455 to 465 (ELYPTVVRNMG) are Cytoplasmic-facing. The helical transmembrane segment at 466–486 (VGVSSTASRLGSILSPYFVYL) threads the bilayer. At 487–491 (GAYDR) the chain is on the extracellular side. The chain crosses the membrane as a helical span at residues 492 to 512 (RLPYILMGSLTILTAIITLFF). Over 513 to 564 (PESSGVSLPETIDEMQKVKKLKQRQSLSKKGSPKESKGNVSRTSRTSEPKGF) the chain is Cytoplasmic. Residues 532-564 (KLKQRQSLSKKGSPKESKGNVSRTSRTSEPKGF) form a disordered region.

The protein belongs to the major facilitator (TC 2.A.1) superfamily. Organic cation transporter (TC 2.A.1.19) family. Predominantly expressed in testis.

Its subcellular location is the peroxisome membrane. In terms of biological role, sodium-ion independent, medium affinity carnitine transporter. Also transports organic cations such as tetraethylammonium (TEA) without the involvement of sodium. Relative uptake activity ratio of carnitine to TEA is 746. The polypeptide is Solute carrier family 22 member 21 (Slc22a21) (Mus musculus (Mouse)).